An 807-amino-acid polypeptide reads, in one-letter code: Glycerol-3-phosphate acyltransferase (807 aa).

The short motif at 305-310 is the HXXXXD motif element; it reads CHRSHM.

The protein belongs to the GPAT/DAPAT family.

Its subcellular location is the cell inner membrane. The enzyme catalyses sn-glycerol 3-phosphate + an acyl-CoA = a 1-acyl-sn-glycero-3-phosphate + CoA. It participates in phospholipid metabolism; CDP-diacylglycerol biosynthesis; CDP-diacylglycerol from sn-glycerol 3-phosphate: step 1/3. This Vibrio atlanticus (strain LGP32) (Vibrio splendidus (strain Mel32)) protein is Glycerol-3-phosphate acyltransferase.